Reading from the N-terminus, the 2160-residue chain is Autophagy-related protein 2 (2160 aa).

Composition is skewed to polar residues over residues 100 to 116 (SFST…SPSK), 153 to 168 (AITS…SASI), and 292 to 306 (TTPV…SSRI). Disordered regions lie at residues 100–130 (SFST…ILPT), 142–174 (EPKE…DEEE), 288–317 (PASP…TPDA), 347–371 (RMEG…DRSD), 401–519 (LHDD…DFAN), 657–689 (DRRH…HSSA), 715–739 (FEGT…SKSQ), and 953–978 (FSTA…SPPP). Residues 404–414 (DDLEPPEDLVP) show a composition bias toward acidic residues. The segment covering 415-425 (QDDQFPPSSAT) has biased composition (low complexity). Residues 439–451 (TSPSGIDTEQTAP) show a composition bias toward polar residues. Positions 483–497 (SHSASSPSGSLPSRE) are enriched in low complexity. Residues 500–517 (NRQTAPPSESGSIGSSDF) are compositionally biased toward polar residues. Over residues 657-666 (DRRHTDETVH) the composition is skewed to basic and acidic residues.

This sequence belongs to the ATG2 family.

It is found in the preautophagosomal structure membrane. Its subcellular location is the endoplasmic reticulum membrane. It carries out the reaction a 1,2-diacyl-sn-glycero-3-phosphocholine(in) = a 1,2-diacyl-sn-glycero-3-phosphocholine(out). It catalyses the reaction a 1,2-diacyl-sn-glycero-3-phospho-L-serine(in) = a 1,2-diacyl-sn-glycero-3-phospho-L-serine(out). The enzyme catalyses a 1,2-diacyl-sn-glycero-3-phosphoethanolamine(in) = a 1,2-diacyl-sn-glycero-3-phosphoethanolamine(out). Functionally, lipid transfer protein required for autophagosome completion and peroxisome degradation. Tethers the edge of the isolation membrane (IM) to the endoplasmic reticulum (ER) and mediates direct lipid transfer from ER to IM for IM expansion. Atg2 binds to the ER exit site (ERES), which is the membrane source for autophagosome formation, using basic residues in its N-terminal region (NR) and to the expanding edge of the IM through its C-terminal region. The latter binding is assisted by an atg18-PtdIns3P interaction. Atg2 then extracts phospholipids from the membrane source using its NR and transfers them to atg9 to the IM through its predicted beta-sheet-rich structure for membrane expansion. The sequence is that of Autophagy-related protein 2 (atg2) from Aspergillus fumigatus (strain ATCC MYA-4609 / CBS 101355 / FGSC A1100 / Af293) (Neosartorya fumigata).